We begin with the raw amino-acid sequence, 254 residues long: Uridine-cytidine kinase 1 (254 aa).

The tract at residues 1-29 (MASAGGDECEGAAPEADRPHQRPFLIGVS) is disordered. ATP is bound at residue 30 to 38 (GGTASGKST). Positions 87, 115, 120, 146, 155, and 163 each coordinate substrate. Residue aspartate 192 coordinates ATP. Residues 224-254 (SYKRTFSEPGDHPGMLTSGKRSHLESSSRPH) form a disordered region. The residue at position 228 (threonine 228) is a Phosphothreonine. Serine 230 carries the post-translational modification Phosphoserine. Residues 245-254 (SHLESSSRPH) are compositionally biased toward basic and acidic residues.

This sequence belongs to the uridine kinase family.

The enzyme catalyses uridine + ATP = UMP + ADP + H(+). It carries out the reaction cytidine + ATP = CMP + ADP + H(+). It participates in pyrimidine metabolism; CTP biosynthesis via salvage pathway; CTP from cytidine: step 1/3. It functions in the pathway pyrimidine metabolism; UMP biosynthesis via salvage pathway; UMP from uridine: step 1/1. Functionally, phosphorylates uridine and cytidine to uridine monophosphate and cytidine monophosphate. Does not phosphorylate deoxyribonucleosides or purine ribonucleosides. Can use ATP or GTP as a phosphate donor. The sequence is that of Uridine-cytidine kinase 1 (UCK1) from Macaca fascicularis (Crab-eating macaque).